The chain runs to 738 residues: MPLSRSLSMSSLPGLEDWEDEFDPENAVLFEVAWEVANKVGGIYTVLQTKAKVTGDEWGDNYYLVGPYTEQGVRTQVELLEPPTPELKRTLDSMNSKGCKVYFGRWLIEGGPLVVLLDVGASAWALERWKGELWDTCNIGVPWYDREANDAVLFGFLTTWFLGEFLAQNEEKPYVVAHFHEWLAGVGLCLCRARRLPVATIFTTHATLLGRYLCAGAVDFYNNLENFNVDKEAGERQIYHRYCMERAAAHCAHVFTTVSQITAIEAQHLLKRKPDIVTPNGLNVKKFSAMHEFQNLHAQSKARIQEFVRGHFYGHLDFNLDKTLYFFIAGRYEFSNKGADIFLEALARLNYLLRVNGSEQTVVAFFIMPARTNNFNVETLKGQAVRKQLWDTANTVKEKFGRKLYESLLVGSLPDMNKMLDKEDFTMMKRAIFATQRQSFPPVCTHNMLDDSSDPILTTIRRIGLFNSSADRVKVIFHPEFLSSTSPLLPVDYEEFVRGCHLGVFPSYYEPWGYTPAECTVMGIPSISTNLSGFGCFMEEHIADPSAYGIYILDRRFRSLDDSCSQLTSFLYSFCQQSRRQRIIQRNRTERLSDLLDWKYLGRYYMSARHMALAKAFPDHFTYEPHEVDATQGYRYPRPASVPPSPSLSRHSSPHQSEDEEEPRDGPLREDSERYDEEEEAAKDRRNIRAPEWPRRASCSSSTGGSKRSNSVDTGPSSSLSTPTEPLSPTSSLGEERN.

Ser8 carries the phosphoserine; by AMPK and PKA modification. Ser11 carries the post-translational modification Phosphoserine. Residue Lys39 participates in UDP binding. UDP-alpha-D-glucose-binding residues include His205 and Arg211. Positions 291, 292, 294, 297, and 301 each coordinate alpha-D-glucose 6-phosphate. Residue Arg331 participates in UDP binding. Arg331 is a binding site for UDP-alpha-D-glucose. The residue at position 412 (Ser412) is a Phosphoserine. An alpha-D-glucose 6-phosphate-binding site is contributed by His501. Residues Glu510, Trp512, and Gly513 each coordinate UDP-alpha-D-glucose. Thr515 serves as a coordination point for UDP. Alpha-D-glucose 6-phosphate is bound by residues Arg582 and Arg586. The segment at 632-738 (QGYRYPRPAS…PTSSLGEERN (107 aa)) is disordered. Phosphoserine is present on residues Ser641 and Ser645. Residue Ser649 is modified to Phosphoserine; by GSK3-alpha and GSK3-beta. 4 positions are modified to phosphoserine: Ser652, Ser653, Ser657, and Ser672. Basic and acidic residues predominate over residues 682-695 (AKDRRNIRAPEWPR). A phosphoserine mark is found at Ser698, Ser709, and Ser711. The span at 698-738 (SCSSSTGGSKRSNSVDTGPSSSLSTPTEPLSPTSSLGEERN) shows a compositional bias: low complexity. The residue at position 722 (Thr722) is a Phosphothreonine. Residues Ser728 and Ser732 each carry the phosphoserine modification.

Belongs to the glycosyltransferase 3 family. Part of the GYS1-GYG1 complex, a heterooctamer composed of a tetramer of GYS1 and 2 dimers of GYG1, where each GYS1 protomer binds to one GYG1 subunit (via GYG1 C-terminus); the GYS1 tetramer may dissociate from GYG1 dimers to continue glycogen polymerization on its own. Phosphorylation at Ser-8 by AMPK inactivates the enzyme activity. Primed phosphorylation at Ser-657 (site 5) by CSNK2A1 and CSNK2A2 is required for inhibitory phosphorylation at Ser-641 (site 3a), Ser-645 (site 3b), Ser-649 (site 3c) and Ser-653 (site 4) by GSK3A an GSK3B. Phosphorylated at Ser-641 by PASK, leading to inactivation; phosphorylation by PASK is inhibited by glycogen. Phosphorylated at Ser-641 by DYRK2, leading to inactivation. Dephosphorylation at Ser-641 and Ser-645 by PP1 activates the enzyme.

It catalyses the reaction [(1-&gt;4)-alpha-D-glucosyl](n) + UDP-alpha-D-glucose = [(1-&gt;4)-alpha-D-glucosyl](n+1) + UDP + H(+). The protein operates within glycan biosynthesis; glycogen biosynthesis. With respect to regulation, allosteric activation by glucose-6-phosphate. Phosphorylation reduces the activity towards UDP-glucose. When in the non-phosphorylated state, glycogen synthase does not require glucose-6-phosphate as an allosteric activator; when phosphorylated it does. In terms of biological role, glycogen synthase participates in the glycogen biosynthetic process along with glycogenin and glycogen branching enzyme. Extends the primer composed of a few glucose units formed by glycogenin by adding new glucose units to it. In this context, glycogen synthase transfers the glycosyl residue from UDP-Glc to the non-reducing end of alpha-1,4-glucan. In Rattus norvegicus (Rat), this protein is Glycogen [starch] synthase, muscle (Gys1).